Reading from the N-terminus, the 389-residue chain is Phospho-N-acetylmuramoyl-pentapeptide-transferase (389 aa).

10 helical membrane-spanning segments follow: residues 25–45 (RAVMATITALGIGLVCGPWVI), 73–93 (TMGGVLILIGIAVATLLWGDL), 97–117 (FIWIVMLVTFGFGVIGWVDDY), 135–155 (FWQSVIGLFAAVYLAFSVSEA), 190–210 (ISYPLGVWGFIVLTYFVIVGA), 222–242 (GLVIMPVVLVGASLGVFAYVM), 258–278 (GAGELLIFCSAMGGAGLAFLW), 286–306 (VFMGDVGALALGGALGTVAVI), 311–331 (IVLFIMGGIFVAETLSVMLQV), and 366–386 (QVVVRFWIITLMLCLFGLTTL).

This sequence belongs to the glycosyltransferase 4 family. MraY subfamily. Mg(2+) serves as cofactor.

It localises to the cell inner membrane. It catalyses the reaction UDP-N-acetyl-alpha-D-muramoyl-L-alanyl-gamma-D-glutamyl-meso-2,6-diaminopimeloyl-D-alanyl-D-alanine + di-trans,octa-cis-undecaprenyl phosphate = di-trans,octa-cis-undecaprenyl diphospho-N-acetyl-alpha-D-muramoyl-L-alanyl-D-glutamyl-meso-2,6-diaminopimeloyl-D-alanyl-D-alanine + UMP. The protein operates within cell wall biogenesis; peptidoglycan biosynthesis. Catalyzes the initial step of the lipid cycle reactions in the biosynthesis of the cell wall peptidoglycan: transfers peptidoglycan precursor phospho-MurNAc-pentapeptide from UDP-MurNAc-pentapeptide onto the lipid carrier undecaprenyl phosphate, yielding undecaprenyl-pyrophosphoryl-MurNAc-pentapeptide, known as lipid I. The sequence is that of Phospho-N-acetylmuramoyl-pentapeptide-transferase from Burkholderia cenocepacia (strain HI2424).